An 80-amino-acid chain; its full sequence is Putative UPF0377 protein YMR324C (80 aa).

A helical membrane pass occupies residues 13-33 (ACIFIDSVCEGIVFWGLCLFV).

The protein belongs to the UPF0377 family.

Its subcellular location is the membrane. In Saccharomyces cerevisiae (strain ATCC 204508 / S288c) (Baker's yeast), this protein is Putative UPF0377 protein YMR324C.